The primary structure comprises 268 residues: Unknown seed protein 30.1 (268 aa).

The signal sequence occupies residues 1–22 (MEFAHLTVLSLFCLAFVGITAT). A BURP domain is found at 68 to 259 (LFFEHDLHPR…GNKAAAWVPN (192 aa)).

This Vicia faba (Broad bean) protein is Unknown seed protein 30.1.